The following is a 194-amino-acid chain: Putative 3-methyladenine DNA glycosylase (194 aa).

Belongs to the DNA glycosylase MPG family.

The polypeptide is Putative 3-methyladenine DNA glycosylase (Anaeromyxobacter sp. (strain Fw109-5)).